A 285-amino-acid polypeptide reads, in one-letter code: Eukaryotic translation initiation factor 3 subunit F-2 (285 aa).

The region spanning 11-145 (VYLKPLVFFQ…TRLYCAVEMG (135 aa)) is the MPN domain.

It belongs to the eIF-3 subunit F family. Component of the eukaryotic translation initiation factor 3 (eIF-3) complex. The eIF-3 complex interacts with pix.

It is found in the cytoplasm. Component of the eukaryotic translation initiation factor 3 (eIF-3) complex, which is involved in protein synthesis of a specialized repertoire of mRNAs and, together with other initiation factors, stimulates binding of mRNA and methionyl-tRNAi to the 40S ribosome. The eIF-3 complex specifically targets and initiates translation of a subset of mRNAs involved in cell proliferation. This Drosophila melanogaster (Fruit fly) protein is Eukaryotic translation initiation factor 3 subunit F-2.